A 405-amino-acid polypeptide reads, in one-letter code: Indoleamine 2,3-dioxygenase 2 (405 aa).

Residue His347 coordinates heme.

This sequence belongs to the indoleamine 2,3-dioxygenase family. It depends on heme as a cofactor. Expressed mainly in antigen-presenting immune cells, liver, kidney, brain, and placenta. Highly expressed in kidney, followed by epididymis and liver (at protein level). Detected in the tails of the spermatozoa in the testis and in the kidney tubules (at protein level). Constitutively expressed in brain.

It carries out the reaction L-tryptophan + O2 = N-formyl-L-kynurenine. It participates in amino-acid degradation; L-tryptophan degradation via kynurenine pathway; L-kynurenine from L-tryptophan: step 1/2. With respect to regulation, activity is inhibited by D-1MT (1-methyl-D-tryptophan) and MTH-trp (methylthiohydantoin-DL-tryptophan) but not L-1MT (1-methyl-L-tryptophan). Its function is as follows. Catalyzes the first and rate-limiting step in the kynurenine pathway of tryptophan catabolism. Involved in immune regulation. The polypeptide is Indoleamine 2,3-dioxygenase 2 (Mus musculus (Mouse)).